Reading from the N-terminus, the 149-residue chain is MASSDIQVKELEKRASGQAFELILSPRSKESVPEFPLSPPKKKDLSLEEIQKKLEAAEERRKSHEAEVLKQLAEKREHEKEVLQKAIEENNNFSKMAEEKLTHKMEANKENREAQMAAKLERLREKDKHIEEVRKNKESKDPADETEAD.

Position 2 is an N-acetylalanine (Ala-2). Ser-4 is subject to Phosphoserine. In terms of domain architecture, SLD spans 4-145; it reads SDIQVKELEK…NKESKDPADE (142 aa). Lys-9 carries the N6-acetyllysine modification. Residue Ser-16 is modified to Phosphoserine. Ser-25 bears the Phosphoserine; by CDK1, MAPK1 and MAPK3 mark. N6-methyllysine is present on Lys-29. Ser-31 is modified (phosphoserine). Position 38 is a phosphoserine; by CDK1, MAPK1 and MAPK3 (Ser-38). Positions 41 to 140 form a coiled coil; the sequence is KKKDLSLEEI…EEVRKNKESK (100 aa). The residue at position 63 (Ser-63) is a Phosphoserine; by PKA. Residues Lys-100 and Lys-119 each carry the N6-acetyllysine modification. Residues 121–143 are compositionally biased toward basic and acidic residues; it reads ERLREKDKHIEEVRKNKESKDPA. The tract at residues 121 to 149 is disordered; sequence ERLREKDKHIEEVRKNKESKDPADETEAD.

Belongs to the stathmin family. As to quaternary structure, binds to two alpha/beta-tubulin heterodimers. Interacts with KIST. Many different phosphorylated forms are observed depending on specific combinations among the sites which can be phosphorylated. MAPK is responsible for the phosphorylation of stathmin in response to NGF. Phosphorylation at Ser-16 seems to be required for neuron polarization.

Its subcellular location is the cytoplasm. It is found in the cytoskeleton. Functionally, involved in the regulation of the microtubule (MT) filament system by destabilizing microtubules. Prevents assembly and promotes disassembly of microtubules. Its phosphorylation at Ser-16 may be required for axon formation during neurogenesis. Involved in the control of the learned and innate fear. This is Stathmin (STMN1) from Bos taurus (Bovine).